A 232-amino-acid chain; its full sequence is Orotidine 5'-phosphate decarboxylase (232 aa).

Substrate is bound by residues Asp-13, Lys-35, 62–71 (DLKFHDIPNT), Thr-122, Arg-182, Gln-191, Gly-211, and Arg-212. Lys-64 acts as the Proton donor in catalysis.

It belongs to the OMP decarboxylase family. Type 1 subfamily. As to quaternary structure, homodimer.

It carries out the reaction orotidine 5'-phosphate + H(+) = UMP + CO2. The protein operates within pyrimidine metabolism; UMP biosynthesis via de novo pathway; UMP from orotate: step 2/2. Catalyzes the decarboxylation of orotidine 5'-monophosphate (OMP) to uridine 5'-monophosphate (UMP). This Pseudomonas aeruginosa (strain LESB58) protein is Orotidine 5'-phosphate decarboxylase.